A 1032-amino-acid polypeptide reads, in one-letter code: Reticulon-3 (1032 aa).

A compositionally biased stretch (low complexity) spans 1–24; that stretch reads MAEPSAATQSHSISSSSFGAEPSA. Residues 1 to 61 are disordered; sequence MAEPSAATQS…SSSSSQPVSL (61 aa). Residue A2 is modified to N-acetylalanine. The Cytoplasmic segment spans residues 2–863; it reads AEPSAATQSH…KKTGFVFGTT (862 aa). S30 carries the phosphoserine modification. A compositionally biased stretch (low complexity) spans 32–61; it reads GACPALGTKSCSSSCADSFVSSSSSQPVSL. Phosphoserine occurs at positions 229, 243, 246, 283, 316, and 453. Residues 545–568 show a composition bias toward basic and acidic residues; sequence CEREEKTSKNFEELVSDSELHQDQ. A disordered region spans residues 545–617; the sequence is CEREEKTSKN…NPKLPSTVSP (73 aa). Polar residues predominate over residues 605 to 617; sequence TTENPKLPSTVSP. A phosphoserine mark is found at S649 and S650. The segment covering 696 to 715 has biased composition (basic and acidic residues); that stretch reads NESGGSEIKDIGSKYSEQSK. The disordered stretch occupies residues 696–726; that stretch reads NESGGSEIKDIGSKYSEQSKETNGSEPLGVF. S735 is modified (phosphoserine). The 189-residue stretch at 844–1032 folds into the Reticulon domain; that stretch reads VHDLIFWRDV…LPGIAKKKAE (189 aa). Positions 864–887 form an intramembrane region, helical; sequence LIMLLSLAAFSVISVVSYLILALL. Residues 888–947 lie on the Cytoplasmic side of the membrane; that stretch reads SVTISFRIYKSVIQAVQKSEEGHPFKAYLDVDITLSSEAFHNYMNAAMVHINRALKLIIR. An intramembrane region (helical) is located at residues 948 to 968; it reads LFLVEDLVDSLKLAVFMWLMT. Over 969-972 the chain is Cytoplasmic; sequence YVGA. The helical intramembrane region spans 973-993; it reads VFNGITLLILAELLIFSVPIV. Residues 987–1032 form an interaction with FADD region; the sequence is IFSVPIVYEKYKTQIDHYVGIARDQTKSIVEKIQAKLPGIAKKKAE. The Cytoplasmic portion of the chain corresponds to 994–1032; it reads YEKYKTQIDHYVGIARDQTKSIVEKIQAKLPGIAKKKAE. Positions 1000–1002 are interaction with BACE1; that stretch reads QID.

Homodimer. Interacts with ATL1. Interacts with RTN4. Isoform 3 interacts with BACE1, BACE2, BCL2 and FADD. Interacts with ATL2. Interacts with TMEM33. Interacts with ZFYVE27 and with KIF5A in a ZFYVE27-dependent manner. Interacts with RIGI. Interacts with TRIM25. As to quaternary structure, (Microbial infection) Interacts with Coxsackievirus A16, enterovirus 71 and poliovirus P2C proteins. In terms of assembly, (Microbial infection) Interacts with West Nile virus protein NS4A. Isoform 3 is widely expressed, with highest levels in brain, where it is enriched in neuronal cell bodies from gray matter (at protein level). Three times more abundant in macula than in peripheral retina. Isoform 1 is expressed at high levels in brain and at low levels in skeletal muscle. Isoform 2 is only found in melanoma.

Its subcellular location is the endoplasmic reticulum membrane. The protein resides in the golgi apparatus membrane. Functionally, may be involved in membrane trafficking in the early secretory pathway. Inhibits BACE1 activity and amyloid precursor protein processing. May induce caspase-8 cascade and apoptosis. May favor BCL2 translocation to the mitochondria upon endoplasmic reticulum stress. Induces the formation of endoplasmic reticulum tubules. Also acts as an inflammation-resolving regulator by interacting with both TRIM25 and RIGI, subsequently impairing RIGI 'Lys-63'-linked polyubiquitination leading to IRF3 and NF-kappa-B inhibition. Its function is as follows. (Microbial infection) Plays a positive role in viral replication and pathogenesis of enteroviruses. The polypeptide is Reticulon-3 (RTN3) (Homo sapiens (Human)).